Consider the following 113-residue polypeptide: MKQATRKPTTPGDILLYEYLEPLDLKINELAELLHVHRNSVSALINNNRKLTTEMAFRLAKVFDTTVDFWLNLQAAVDLWEVENNMRTQEELGRIETVAEYLARREERAKKVA.

The 55-residue stretch at 16 to 70 (LYEYLEPLDLKINELAELLHVHRNSVSALINNNRKLTTEMAFRLAKVFDTTVDFW) folds into the HTH cro/C1-type domain. The H-T-H motif DNA-binding region spans 27–46 (INELAELLHVHRNSVSALIN).

This sequence belongs to the VapA/VapI family.

This is an uncharacterized protein from Escherichia coli O6:H1 (strain CFT073 / ATCC 700928 / UPEC).